The following is a 425-amino-acid chain: Trigger factor (425 aa).

A PPIase FKBP-type domain is found at 163–248 (GDTAVIDFEG…IHEIKTKELP (86 aa)).

This sequence belongs to the FKBP-type PPIase family. Tig subfamily.

The protein localises to the cytoplasm. It carries out the reaction [protein]-peptidylproline (omega=180) = [protein]-peptidylproline (omega=0). In terms of biological role, involved in protein export. Acts as a chaperone by maintaining the newly synthesized protein in an open conformation. Functions as a peptidyl-prolyl cis-trans isomerase. The chain is Trigger factor from Bacillus mycoides (strain KBAB4) (Bacillus weihenstephanensis).